Consider the following 279-residue polypeptide: Tryptophan synthase alpha chain (279 aa).

Active-site proton acceptor residues include E49 and D60.

Belongs to the TrpA family. In terms of assembly, tetramer of two alpha and two beta chains.

It carries out the reaction (1S,2R)-1-C-(indol-3-yl)glycerol 3-phosphate + L-serine = D-glyceraldehyde 3-phosphate + L-tryptophan + H2O. It functions in the pathway amino-acid biosynthesis; L-tryptophan biosynthesis; L-tryptophan from chorismate: step 5/5. Its function is as follows. The alpha subunit is responsible for the aldol cleavage of indoleglycerol phosphate to indole and glyceraldehyde 3-phosphate. The protein is Tryptophan synthase alpha chain of Nitrosospira multiformis (strain ATCC 25196 / NCIMB 11849 / C 71).